We begin with the raw amino-acid sequence, 382 residues long: Galactokinase (382 aa).

34–37 (EHTD) is a binding site for substrate. Residue 124 to 130 (GAGLSSS) participates in ATP binding. Residues S130 and E162 each contribute to the Mg(2+) site. The Proton acceptor role is filled by D174. Y223 is a binding site for substrate.

This sequence belongs to the GHMP kinase family. GalK subfamily.

It is found in the cytoplasm. It catalyses the reaction alpha-D-galactose + ATP = alpha-D-galactose 1-phosphate + ADP + H(+). The protein operates within carbohydrate metabolism; galactose metabolism. In terms of biological role, catalyzes the transfer of the gamma-phosphate of ATP to D-galactose to form alpha-D-galactose-1-phosphate (Gal-1-P). The protein is Galactokinase of Erwinia tasmaniensis (strain DSM 17950 / CFBP 7177 / CIP 109463 / NCPPB 4357 / Et1/99).